Here is a 392-residue protein sequence, read N- to C-terminus: Succinate--CoA ligase [ADP-forming] subunit beta (392 aa).

The ATP-grasp domain occupies 9–244 (KALLAQYGVG…LSEEESSEIE (236 aa)). Residues K46, 53-55 (GRG), E99, L102, and E107 each bind ATP. 2 residues coordinate Mg(2+): N199 and D213. Substrate is bound by residues N264 and 321–323 (GIV).

It belongs to the succinate/malate CoA ligase beta subunit family. In terms of assembly, heterotetramer of two alpha and two beta subunits. Mg(2+) serves as cofactor.

It carries out the reaction succinate + ATP + CoA = succinyl-CoA + ADP + phosphate. It catalyses the reaction GTP + succinate + CoA = succinyl-CoA + GDP + phosphate. It participates in carbohydrate metabolism; tricarboxylic acid cycle; succinate from succinyl-CoA (ligase route): step 1/1. Succinyl-CoA synthetase functions in the citric acid cycle (TCA), coupling the hydrolysis of succinyl-CoA to the synthesis of either ATP or GTP and thus represents the only step of substrate-level phosphorylation in the TCA. The beta subunit provides nucleotide specificity of the enzyme and binds the substrate succinate, while the binding sites for coenzyme A and phosphate are found in the alpha subunit. The polypeptide is Succinate--CoA ligase [ADP-forming] subunit beta (Wolinella succinogenes (strain ATCC 29543 / DSM 1740 / CCUG 13145 / JCM 31913 / LMG 7466 / NCTC 11488 / FDC 602W) (Vibrio succinogenes)).